The primary structure comprises 220 residues: NADH-quinone oxidoreductase subunit B (220 aa).

Residues Cys-37, Cys-38, Cys-103, and Cys-132 each coordinate [4Fe-4S] cluster. The tract at residues 174–220 is disordered; sequence PSSERYAPKNRSQRKLAERQQAAQRREMGAEKPLGALEERAELNAGR. The segment covering 210–220 has biased composition (basic and acidic residues); the sequence is LEERAELNAGR.

It belongs to the complex I 20 kDa subunit family. As to quaternary structure, NDH-1 is composed of 14 different subunits. Subunits NuoB, C, D, E, F, and G constitute the peripheral sector of the complex. [4Fe-4S] cluster serves as cofactor.

The protein resides in the cell membrane. It catalyses the reaction a quinone + NADH + 5 H(+)(in) = a quinol + NAD(+) + 4 H(+)(out). NDH-1 shuttles electrons from NADH, via FMN and iron-sulfur (Fe-S) centers, to quinones in the respiratory chain. The immediate electron acceptor for the enzyme in this species is believed to be a menaquinone. Couples the redox reaction to proton translocation (for every two electrons transferred, four hydrogen ions are translocated across the cytoplasmic membrane), and thus conserves the redox energy in a proton gradient. The polypeptide is NADH-quinone oxidoreductase subunit B (Saccharopolyspora erythraea (strain ATCC 11635 / DSM 40517 / JCM 4748 / NBRC 13426 / NCIMB 8594 / NRRL 2338)).